A 194-amino-acid polypeptide reads, in one-letter code: Protein GrpE (194 aa).

Residues 1-24 (MEEKDKEEKVTGENLEPEDKNLEQ) show a composition bias toward basic and acidic residues. The segment at 1–41 (MEEKDKEEKVTGENLEPEDKNLEQEDKEEVVGPQEEQQIDE) is disordered.

This sequence belongs to the GrpE family. As to quaternary structure, homodimer.

It is found in the cytoplasm. Functionally, participates actively in the response to hyperosmotic and heat shock by preventing the aggregation of stress-denatured proteins, in association with DnaK and GrpE. It is the nucleotide exchange factor for DnaK and may function as a thermosensor. Unfolded proteins bind initially to DnaJ; upon interaction with the DnaJ-bound protein, DnaK hydrolyzes its bound ATP, resulting in the formation of a stable complex. GrpE releases ADP from DnaK; ATP binding to DnaK triggers the release of the substrate protein, thus completing the reaction cycle. Several rounds of ATP-dependent interactions between DnaJ, DnaK and GrpE are required for fully efficient folding. This Carboxydothermus hydrogenoformans (strain ATCC BAA-161 / DSM 6008 / Z-2901) protein is Protein GrpE.